The sequence spans 347 residues: Heat-inducible transcription repressor HrcA (347 aa).

The protein belongs to the HrcA family.

Its function is as follows. Negative regulator of class I heat shock genes (grpE-dnaK-dnaJ and groELS operons). Prevents heat-shock induction of these operons. The polypeptide is Heat-inducible transcription repressor HrcA (Lactobacillus delbrueckii subsp. bulgaricus (strain ATCC BAA-365 / Lb-18)).